The primary structure comprises 274 residues: Penicillin-insensitive murein endopeptidase (274 aa).

The N-terminal stretch at 1 to 19 (MNKTAIALLALLASSASLA) is a signal peptide. 3 disulfides stabilise this stretch: Cys44–Cys265, Cys187–Cys235, and Cys216–Cys223. Residues His110, His113, Asp120, Asp147, His150, and His211 each contribute to the Zn(2+) site. The segment at 227-274 (PLPPPGDGCGAELQSWFEPPKPGTTKPEKKTPPPLPPSCQALLDEHVI) is disordered.

Belongs to the peptidase M74 family. In terms of assembly, dimer. It depends on Zn(2+) as a cofactor.

The protein localises to the periplasm. Functionally, murein endopeptidase that cleaves the D-alanyl-meso-2,6-diamino-pimelyl amide bond that connects peptidoglycan strands. Likely plays a role in the removal of murein from the sacculus. This chain is Penicillin-insensitive murein endopeptidase, found in Escherichia coli O9:H4 (strain HS).